The primary structure comprises 218 residues: GTP cyclohydrolase 1 (218 aa).

Positions 111, 114, and 182 each coordinate Zn(2+).

This sequence belongs to the GTP cyclohydrolase I family. Toroid-shaped homodecamer, composed of two pentamers of five dimers.

It catalyses the reaction GTP + H2O = 7,8-dihydroneopterin 3'-triphosphate + formate + H(+). Its pathway is cofactor biosynthesis; 7,8-dihydroneopterin triphosphate biosynthesis; 7,8-dihydroneopterin triphosphate from GTP: step 1/1. This Buchnera aphidicola subsp. Schizaphis graminum (strain Sg) protein is GTP cyclohydrolase 1.